The following is a 269-amino-acid chain: Tungstate-binding protein TupA (269 aa).

Residues 1–17 (MKKIISLALALALSASA) form the signal peptide.

In terms of assembly, the complex is composed of two ATP-binding proteins (TupC), two transmembrane proteins (TupB) and a solute-binding protein (TupA).

It is found in the periplasm. Functionally, part of an ABC transporter complex involved in ultra-high affinity tungstate uptake. Specifically binds tungstate. The protein is Tungstate-binding protein TupA of Campylobacter jejuni subsp. jejuni serotype O:2 (strain ATCC 700819 / NCTC 11168).